The sequence spans 371 residues: Cytochrome b (371 aa).

8 consecutive transmembrane segments (helical) span residues 25 to 45 (FGSMLLACSSMQVLTGFFLAV), 69 to 90 (WMMQNLHAIGASMFFICIYIHI), 105 to 125 (WLSGTTLLIMLMVTAFFGXXX), 170 to 190 (XXXXXXXXXXXXXXXXXXXXX), 218 to 238 (YKDLLMLSLMVLMLLMTVSFL), 280 to 300 (LGGALALAMSIMILLTVPFTH), 312 to 332 (IMQLMFWTLVATFMVITWAAT), and 339 to 358 (FTMISQIASTIYFLFFIMNP). Heme b contacts are provided by His75 and His89. Xaa174 and Xaa188 together coordinate heme b.

This sequence belongs to the cytochrome b family. As to quaternary structure, the cytochrome bc1 complex contains 3 respiratory subunits (MT-CYB, CYC1 and UQCRFS1), 2 core proteins (UQCRC1 and UQCRC2) and probably 6 low-molecular weight proteins. The cofactor is heme b.

It is found in the mitochondrion inner membrane. In terms of biological role, component of the ubiquinol-cytochrome c reductase complex (complex III or cytochrome b-c1 complex) that is part of the mitochondrial respiratory chain. The b-c1 complex mediates electron transfer from ubiquinol to cytochrome c. Contributes to the generation of a proton gradient across the mitochondrial membrane that is then used for ATP synthesis. This chain is Cytochrome b (MT-CYB), found in Eryx tataricus (Tartar sand boa).